We begin with the raw amino-acid sequence, 509 residues long: Protein root UVB sensitive 5 (509 aa).

The interval 22–49 (CQPKRRRVEHLRCSAQPSSIREDDEDAD) is disordered.

This sequence belongs to the RUS1 family.

This is Protein root UVB sensitive 5 from Arabidopsis thaliana (Mouse-ear cress).